We begin with the raw amino-acid sequence, 632 residues long: DNA topoisomerase 4 subunit B (632 aa).

Residues Y5, N42, D69, 110–116 (GLHGVGI), and K334 each bind ATP. In terms of domain architecture, Toprim spans 412-525 (TELFLVEGDS…DGHVYVAMPP (114 aa)). Mg(2+)-binding residues include E418, D490, and D492.

Belongs to the type II topoisomerase family. ParE type 1 subfamily. Heterotetramer composed of ParC and ParE. The cofactor is Mg(2+). Mn(2+) is required as a cofactor. Requires Ca(2+) as cofactor.

It catalyses the reaction ATP-dependent breakage, passage and rejoining of double-stranded DNA.. Functionally, topoisomerase IV is essential for chromosome segregation. It relaxes supercoiled DNA. Performs the decatenation events required during the replication of a circular DNA molecule. In Haemophilus influenzae (strain ATCC 51907 / DSM 11121 / KW20 / Rd), this protein is DNA topoisomerase 4 subunit B.